We begin with the raw amino-acid sequence, 412 residues long: Phytoene synthase 1, chloroplastic (412 aa).

A chloroplast-targeting transit peptide spans 1 to 129; it reads MSVALLWVVS…AYDRCGEVCA (129 aa).

Belongs to the phytoene/squalene synthase family. As to quaternary structure, monomer. Interacts with SGR1.

The protein resides in the plastid. The protein localises to the chloroplast. It catalyses the reaction 2 (2E,6E,10E)-geranylgeranyl diphosphate = 15-cis-phytoene + 2 diphosphate. Its pathway is carotenoid biosynthesis; phytoene biosynthesis; all-trans-phytoene from geranylgeranyl diphosphate: step 1/1. Catalyzes the reaction from prephytoene diphosphate to phytoene. In Solanum lycopersicum (Tomato), this protein is Phytoene synthase 1, chloroplastic (PSY1).